Here is a 401-residue protein sequence, read N- to C-terminus: Probable tRNA sulfurtransferase (401 aa).

One can recognise a THUMP domain in the interval 60–165; it reads EPISEQLKGV…EQATYITFKD (106 aa). Residues 183–184, 208–209, arginine 265, glycine 287, and glutamine 296 contribute to the ATP site; these read ML and HF.

This sequence belongs to the ThiI family.

The protein resides in the cytoplasm. It catalyses the reaction [ThiI sulfur-carrier protein]-S-sulfanyl-L-cysteine + a uridine in tRNA + 2 reduced [2Fe-2S]-[ferredoxin] + ATP + H(+) = [ThiI sulfur-carrier protein]-L-cysteine + a 4-thiouridine in tRNA + 2 oxidized [2Fe-2S]-[ferredoxin] + AMP + diphosphate. The enzyme catalyses [ThiS sulfur-carrier protein]-C-terminal Gly-Gly-AMP + S-sulfanyl-L-cysteinyl-[cysteine desulfurase] + AH2 = [ThiS sulfur-carrier protein]-C-terminal-Gly-aminoethanethioate + L-cysteinyl-[cysteine desulfurase] + A + AMP + 2 H(+). The protein operates within cofactor biosynthesis; thiamine diphosphate biosynthesis. Its function is as follows. Catalyzes the ATP-dependent transfer of a sulfur to tRNA to produce 4-thiouridine in position 8 of tRNAs, which functions as a near-UV photosensor. Also catalyzes the transfer of sulfur to the sulfur carrier protein ThiS, forming ThiS-thiocarboxylate. This is a step in the synthesis of thiazole, in the thiamine biosynthesis pathway. The sulfur is donated as persulfide by IscS. This Bacillus pumilus (strain SAFR-032) protein is Probable tRNA sulfurtransferase.